The sequence spans 78 residues: Large ribosomal subunit protein bL28 (78 aa).

Positions 1-20 (MSRVCQVTGKRPAVGNNRSH) are disordered.

This sequence belongs to the bacterial ribosomal protein bL28 family.

The sequence is that of Large ribosomal subunit protein bL28 from Actinobacillus succinogenes (strain ATCC 55618 / DSM 22257 / CCUG 43843 / 130Z).